A 317-amino-acid polypeptide reads, in one-letter code: Acetyl-coenzyme A carboxylase carboxyl transferase subunit alpha (317 aa).

The CoA carboxyltransferase C-terminal domain maps to 40–293 (LEGRVRDAMM…GTVIADALKE (254 aa)).

The protein belongs to the AccA family. Acetyl-CoA carboxylase is a heterohexamer composed of biotin carboxyl carrier protein (AccB), biotin carboxylase (AccC) and two subunits each of ACCase subunit alpha (AccA) and ACCase subunit beta (AccD).

It is found in the cytoplasm. It catalyses the reaction N(6)-carboxybiotinyl-L-lysyl-[protein] + acetyl-CoA = N(6)-biotinyl-L-lysyl-[protein] + malonyl-CoA. It functions in the pathway lipid metabolism; malonyl-CoA biosynthesis; malonyl-CoA from acetyl-CoA: step 1/1. Its function is as follows. Component of the acetyl coenzyme A carboxylase (ACC) complex. First, biotin carboxylase catalyzes the carboxylation of biotin on its carrier protein (BCCP) and then the CO(2) group is transferred by the carboxyltransferase to acetyl-CoA to form malonyl-CoA. This is Acetyl-coenzyme A carboxylase carboxyl transferase subunit alpha from Sinorhizobium fredii (strain NBRC 101917 / NGR234).